A 217-amino-acid polypeptide reads, in one-letter code: Imidazole glycerol phosphate synthase subunit HisH (217 aa).

The Glutamine amidotransferase type-1 domain maps to 3–217; that stretch reads TIAIVDYGVG…LYRNFVHWNP (215 aa). Cysteine 82 acts as the Nucleophile in catalysis. Residues histidine 197 and glutamate 199 contribute to the active site.

Heterodimer of HisH and HisF.

The protein resides in the cytoplasm. The enzyme catalyses 5-[(5-phospho-1-deoxy-D-ribulos-1-ylimino)methylamino]-1-(5-phospho-beta-D-ribosyl)imidazole-4-carboxamide + L-glutamine = D-erythro-1-(imidazol-4-yl)glycerol 3-phosphate + 5-amino-1-(5-phospho-beta-D-ribosyl)imidazole-4-carboxamide + L-glutamate + H(+). The catalysed reaction is L-glutamine + H2O = L-glutamate + NH4(+). The protein operates within amino-acid biosynthesis; L-histidine biosynthesis; L-histidine from 5-phospho-alpha-D-ribose 1-diphosphate: step 5/9. Functionally, IGPS catalyzes the conversion of PRFAR and glutamine to IGP, AICAR and glutamate. The HisH subunit catalyzes the hydrolysis of glutamine to glutamate and ammonia as part of the synthesis of IGP and AICAR. The resulting ammonia molecule is channeled to the active site of HisF. This chain is Imidazole glycerol phosphate synthase subunit HisH, found in Cupriavidus pinatubonensis (strain JMP 134 / LMG 1197) (Cupriavidus necator (strain JMP 134)).